Consider the following 869-residue polypeptide: NACHT, LRR and PYD domains-containing protein 6 (869 aa).

A Pyrin domain is found at 37 to 128; it reads KLRDAPLDGR…REHVLRQHAK (92 aa). In terms of domain architecture, NACHT spans 194 to 511; it reads LTVVLQGPAG…EFLAALSYLL (318 aa). Position 200–207 (200–207) interacts with ATP; the sequence is GPAGIGKT. A disordered region spans residues 350–354; sequence KDKKK. An LRR 1 repeat occupies 460 to 485; the sequence is EEDLEKLKLRGSQVQTIFLNKKEIPG. Residues 577–608 form a disordered region; sequence VQGQSHPKGPPVGAKKTAELEDIEDAEEEEEE. The segment covering 596–608 has biased composition (acidic residues); it reads LEDIEDAEEEEEE. LRR repeat units follow at residues 635–658 and 837–860; these read LSSLPEIVLERVRLTRMDLEVLNY and TLSLTSVELSENSLRDLQAVKTSK.

The protein belongs to the NLRP family. Homomultimer; forms the NLRP6 inflammasome polymeric complex, a filament composed of homopolymers in response to pathogens and other damage-associated signals. The core of NLRP6 inflammasomes consists of a signal sensor component (NLRP6), an adapter (PYCARD/ASC), which recruits effector pro-inflammatory caspases (CASP1 and CASP4). Interacts (via pyrin domain) with PYCARD/ASC (via pyrin domain); interaction takes place following NLRP6 activation and formation of liquid-liquid phase separation (LLPS), initiating nucleation which greatly enhances further addition of soluble PYCARD/ASC molecules to the speck in a prion-like polymerization process. Clustered PYCARD/ASC nucleates the formation of CASP1 (or possibly CASP4) filaments through the interaction of their respective CARD domains, acting as a platform for CASP1 polymerization. CASP1 filament formation increases local enzyme concentration, resulting in trans-autocleavage and activation. Active CASP1 then processes IL1B and IL18 precursors, leading to the release of mature cytokines in the extracellular milieu and inflammatory response. Interacts with DHX15. Polyubiquitinated with 'Lys-63'-linked chains, promoting the interaction with PYCARD/ASC and formation of the NLRP6 inflammasome. Deubiquitination by CYLD decreases the interaction with PYCARD/ASC. As to expression, highly expressed in the gastrointestinal tract, predominantly in colonic myofibroblasts and in colonic epithelial and endothelial cells. Within the intestinal mucosa, highly expressed by goblet cells. Also expressed in hepatocytes and in immune cells, including CD4(+) and CD8(+) T-cells, dendritic cells, mastocytes and peritoneal macrophages, as well as in lung, kidney, bladder and gonads.

The protein localises to the cytoplasm. The protein resides in the inflammasome. It localises to the cell membrane. It is found in the nucleus membrane. Acts as the sensor component of the NLRP6 inflammasome, which mediates inflammasome activation in response to various pathogen-associated signals, leading to maturation and secretion of IL1B and IL18. Inflammasomes are supramolecular complexes that assemble in the cytosol in response to pathogens and other damage-associated signals and play critical roles in innate immunity and inflammation. Acts as a recognition receptor (PRR): recognizes and binds specific pathogens and other damage-associated signals, such as lipoteichoic acid (LTA), a cell-wall component of Gram-positive bacteria, or double stranded RNA (dsRNA). May also recognize and bind lipopolysaccharide (LPS), a major component of the outer membrane of Gram-negative bacteria; however, LPS is probably not a major activator of the NLRP6 inflammasome. Following LTA- or dsRNA-binding, NLRP6 undergoes liquid-liquid phase separation (LLPS), enhancing multivalent interactions, an essential step for the formation of the NLRP6 inflammasome polymeric complex. The NLRP6 inflammasome acts by promoting recruitment of effector pro-inflammatory caspases (CASP1 and/or CASP4) that catalyze maturation and secretion of IL1B and IL18 in the extracellular milieu. The NLRP6 inflammasome plays a central role in the maintenance of epithelial integrity and host defense against microbial infections in the intestine. Required to restrict infection against Gram-positive bacteria by recognizing lipoteichoic acid (LTA), leading to recruitment of CASP4 and CASP1, and subsequent maturation and secretion of IL1B and IL18. Involved in intestinal antiviral innate immunity together with DHX15: recognizes and binds viral dsRNA to restrict infection by enteric viruses through the interferon pathway and GSDMD-dependent release of IL18. Required to prevent infection by the apicomplexan parasite C.tyzzeri in enterocytes by promoting GSDMD-dependent release of IL18. The NLRP6 inflammasome may also regulate the gut microbiota composition by acting as a sensor of microbiota-associated metabolites to form a PYCARD/ASC-dependent inflammasome for downstream IL18 release and secretion of antimicrobial peptides. Its role in the regulation of the gut microbiota composition is however subject to discussion. Essential for gut mucosal self-renewal and proliferation. Regulate mucus secretion in an inflammasome- and autophagy-dependent manner to prevent invasion by enteric bacteria. During systemic bacterial infections, the NLRP6 inflammasome negatively regulates neutrophil recruitment and neutrophil extracellular traps (NETs) formation. May promote peripheral nerve recovery following injury via an inflammasome-independent mechanism. In Mus musculus (Mouse), this protein is NACHT, LRR and PYD domains-containing protein 6.